Consider the following 81-residue polypeptide: Photosystem I iron-sulfur center (81 aa).

4Fe-4S ferredoxin-type domains follow at residues 2–31 (SHSV…MVAW) and 39–68 (IASA…VRVY). 8 residues coordinate [4Fe-4S] cluster: Cys11, Cys14, Cys17, Cys21, Cys48, Cys51, Cys54, and Cys58.

The eukaryotic PSI reaction center is composed of at least 11 subunits. [4Fe-4S] cluster serves as cofactor.

It localises to the plastid. The protein localises to the chloroplast thylakoid membrane. It carries out the reaction reduced [plastocyanin] + hnu + oxidized [2Fe-2S]-[ferredoxin] = oxidized [plastocyanin] + reduced [2Fe-2S]-[ferredoxin]. Functionally, apoprotein for the two 4Fe-4S centers FA and FB of photosystem I (PSI); essential for photochemical activity. FB is the terminal electron acceptor of PSI, donating electrons to ferredoxin. The C-terminus interacts with PsaA/B/D and helps assemble the protein into the PSI complex. Required for binding of PsaD and PsaE to PSI. PSI is a plastocyanin/cytochrome c6-ferredoxin oxidoreductase, converting photonic excitation into a charge separation, which transfers an electron from the donor P700 chlorophyll pair to the spectroscopically characterized acceptors A0, A1, FX, FA and FB in turn. This Guillardia theta (Cryptophyte) protein is Photosystem I iron-sulfur center.